A 494-amino-acid chain; its full sequence is Alpha-amylase A (494 aa).

Residues 1–18 (MFLAKSIVCLALLAVANA) form the signal peptide. Gln19 is subject to Pyrrolidone carboxylic acid. Cys46 and Cys102 are oxidised to a cystine. Ca(2+)-binding residues include Asn116, Arg165, and Asp174. Residues Cys153 and Cys167 are joined by a disulfide bond. Arg202 is a chloride binding site. Catalysis depends on Asp204, which acts as the Nucleophile. His208 lines the Ca(2+) pocket. Glu241 serves as the catalytic Proton donor. Residues Asn304 and Arg343 each contribute to the chloride site. Disulfide bonds link Cys376–Cys382 and Cys448–Cys460.

This sequence belongs to the glycosyl hydrolase 13 family. In terms of assembly, monomer. Ca(2+) serves as cofactor. The cofactor is chloride.

It catalyses the reaction Endohydrolysis of (1-&gt;4)-alpha-D-glucosidic linkages in polysaccharides containing three or more (1-&gt;4)-alpha-linked D-glucose units.. The sequence is that of Alpha-amylase A (Amy-p) from Drosophila melanogaster (Fruit fly).